A 462-amino-acid chain; its full sequence is Argininosuccinate lyase (462 aa).

The protein belongs to the lyase 1 family. Argininosuccinate lyase subfamily.

Its subcellular location is the cytoplasm. It catalyses the reaction 2-(N(omega)-L-arginino)succinate = fumarate + L-arginine. It functions in the pathway amino-acid biosynthesis; L-arginine biosynthesis; L-arginine from L-ornithine and carbamoyl phosphate: step 3/3. This is Argininosuccinate lyase from Hydrogenovibrio crunogenus (strain DSM 25203 / XCL-2) (Thiomicrospira crunogena).